Here is a 65-residue protein sequence, read N- to C-terminus: Small ribosomal subunit protein bS21 (65 aa).

It belongs to the bacterial ribosomal protein bS21 family.

This is Small ribosomal subunit protein bS21 from Chlorobium chlorochromatii (strain CaD3).